Reading from the N-terminus, the 885-residue chain is Probable alpha-glucosidase Os06g0675700 (885 aa).

The signal sequence occupies residues 1–33 (MMGSPPAPPARRLGALAVFLLALFLAAPWGVDC). N195, N378, and N397 each carry an N-linked (GlcNAc...) asparagine glycan. Catalysis depends on residues D443 and E446. N-linked (GlcNAc...) asparagine glycans are attached at residues N467 and N477. D540 (proton donor) is an active-site residue. Residues N576 and N844 are each glycosylated (N-linked (GlcNAc...) asparagine).

It belongs to the glycosyl hydrolase 31 family.

The enzyme catalyses Hydrolysis of terminal, non-reducing (1-&gt;4)-linked alpha-D-glucose residues with release of alpha-D-glucose.. This chain is Probable alpha-glucosidase Os06g0675700, found in Oryza sativa subsp. japonica (Rice).